The following is a 706-amino-acid chain: D-(-)-3-hydroxybutyrate oligomer hydrolase (706 aa).

An N-terminal signal peptide occupies residues 1-32; it reads MTTTSKNCLTLTSIAAAVAAVLVLSACGGGSA. The active-site Charge relay system is the Ser-311.

It belongs to the D-(-)-3-hydroxybutyrate oligomer hydrolase family.

The protein resides in the secreted. It catalyses the reaction (3R)-hydroxybutanoate dimer + H2O = 2 (R)-3-hydroxybutanoate + H(+). Its pathway is lipid metabolism; butanoate metabolism. Its function is as follows. Participates in the degradation of poly-3-hydroxybutyrate (PHB). It works downstream of poly(3-hydroxybutyrate) depolymerase, hydrolyzing D(-)-3-hydroxybutyrate oligomers of various length (3HB-oligomers) into 3HB-monomers. The chain is D-(-)-3-hydroxybutyrate oligomer hydrolase from Polaromonas sp. (strain JS666 / ATCC BAA-500).